Here is a 658-residue protein sequence, read N- to C-terminus: Scarecrow-like protein 28 (658 aa).

Disordered stretches follow at residues 43-85 (PCSS…TSGC), 96-115 (LATTRGNGEGFSWNNDNNNR), and 209-265 (PAAV…NNNR). Low complexity predominate over residues 214–228 (EASGGSSTSASSESR). One can recognise a GRAS domain in the interval 265–654 (RNDLQRDFEL…QPLYTISAWT (390 aa)). A leucine repeat I (LRI) region spans residues 272–336 (FELVNLLTGC…VARMWPHIFH (65 aa)). The tract at residues 355–420 (LRFLNQVTPI…NPPHHVRITG (66 aa)) is VHIID. The short motif at 386-390 (VHIID) is the VHIID element. The interval 430–462 (ETGDRLHGFAEAMNLQFEFHPVVDRLEDVRLWM) is leucine repeat II (LRII). Positions 471–563 (VAVNCVMQMH…EMLFGREIRN (93 aa)) are PFYRE. The tract at residues 566-654 (ACEGSHRQER…QPLYTISAWT (89 aa)) is SAW.

It belongs to the GRAS family. In terms of assembly, interacts with SNRNP35 and CYP95. In terms of tissue distribution, expressed in roots and sepals.

It localises to the nucleus. Its function is as follows. Probable transcription factor involved in plant development. The chain is Scarecrow-like protein 28 (SCL28) from Arabidopsis thaliana (Mouse-ear cress).